A 236-amino-acid polypeptide reads, in one-letter code: MSKNKSPLLNESEKMMSEMLPMKVSQSKLNYEEKVYIPTTIRNRKQHCFRRFFPYIALFQIIMLIILLILYFCFPNLFYSTNFNTNFNTSLLQNNSIETKLNSIPPQNNSQKTEVPIILNYTTQKTEVTEPIIINNTTEEIETQTIMIPKSTDQTQTIISAKTTAIISPPETSETIAQVLKNSDKREHDDEELSFTTEMETITTETETSSTIPHLRSLPIKSESSMETTSEETDEE.

Residues 52–72 form a helical membrane-spanning segment; it reads FFPYIALFQIIMLIILLILYF. A disordered region spans residues 183–236; sequence SDKREHDDEELSFTTEMETITTETETSSTIPHLRSLPIKSESSMETTSEETDEE. Positions 196–212 are enriched in low complexity; that stretch reads TTEMETITTETETSSTI.

It is found in the membrane. This is an uncharacterized protein from Acheta domesticus (House cricket).